Reading from the N-terminus, the 257-residue chain is uncharacterized protein (257 aa).

NAD(+) contacts are provided by aspartate 34, aspartate 60, valine 61, asparagine 87, tyrosine 152, and lysine 156. The active-site Proton acceptor is the tyrosine 152.

Belongs to the short-chain dehydrogenases/reductases (SDR) family.

This is an uncharacterized protein from Bacillus subtilis (strain 168).